The chain runs to 110 residues: Small ribosomal subunit protein uS17 (110 aa).

The protein belongs to the universal ribosomal protein uS17 family. As to quaternary structure, part of the 30S ribosomal subunit.

Functionally, one of the primary rRNA binding proteins, it binds specifically to the 5'-end of 16S ribosomal RNA. The polypeptide is Small ribosomal subunit protein uS17 (Petrotoga mobilis (strain DSM 10674 / SJ95)).